The primary structure comprises 600 residues: 1,8-cineole synthase 1, chloroplastic (600 aa).

The N-terminal 31 residues, 1-31 (MATLRISSALIYQNTLTHHFRLRRPHRFVCK), are a transit peptide targeting the chloroplast. Asp342 contributes to the dimethylallyl diphosphate binding site. Residues Asp342 and Asp346 each coordinate Mg(2+). The DDXXD motif signature appears at 342-346 (DDIYD). Residues Glu420, Arg484, and Asn487 each coordinate dimethylallyl diphosphate. Mg(2+)-binding residues include Asn487, Thr491, and Glu495.

The protein belongs to the terpene synthase family. Tpsb subfamily. Mg(2+) serves as cofactor. It depends on Mn(2+) as a cofactor. Predominantly expressed in roots and at much lower levels in siliques. Not found in leaves, flowers or stems. Also detected in flowers in cv. Landsberg erecta. Not expressed in root apical meristem and elongation zone. Found in the vascular system of young roots and additionally in the cortex and epidermal cell layer of older roots.

Its subcellular location is the plastid. The protein resides in the chloroplast. It carries out the reaction (2E)-geranyl diphosphate + H2O = 1,8-cineole + diphosphate. It functions in the pathway secondary metabolite biosynthesis; terpenoid biosynthesis. In terms of biological role, involved in monoterpene (C10) biosynthesis. The major product is 1,8-cineole (52%) followed by minor amounts of sabinene (14.5%), myrcene (13.3%), (-)-(1S)-beta-pinene (7.8%), (-)-(4S)-limonene (4.0%), (E)-beta-ocimene (2.7%), alpha-terpineol (2.4%), (-)-(1S)-alpha-pinene (1.9%), terpinolene (0.8%), and (+)-alpha-thujene (0.6%). The chain is 1,8-cineole synthase 1, chloroplastic (TPS27) from Arabidopsis thaliana (Mouse-ear cress).